We begin with the raw amino-acid sequence, 108 residues long: LBH domain-containing protein 2 (108 aa).

Over residues 1–11 (MSTPRPAPPQP) the composition is skewed to pro residues. Residues 1–108 (MSTPRPAPPQ…SEDPAAPARG (108 aa)) are disordered. An LBH domain is found at 37–62 (QRLPSIVVEPSEADPVESGELRWPLE). Positions 63–85 (SAQRGPSQSRAAAAPSPSLPGEP) are enriched in low complexity.

In Homo sapiens (Human), this protein is LBH domain-containing protein 2.